Reading from the N-terminus, the 282-residue chain is Structure-specific endonuclease subunit slx1 (282 aa).

The GIY-YIG domain occupies 7–97 (GFYGVYLLFC…RLTHVPRKTK (91 aa)). The SLX1-type zinc-finger motif lies at 191-243 (CRVCYERVQDKDDSLHCFHPGCTLTAHIMCLAKLFLLNEPQNLIPVEGLCPSC).

The protein belongs to the SLX1 family. In terms of assembly, forms a heterodimer with slx4. A divalent metal cation serves as cofactor.

It is found in the nucleus. Functionally, catalytic subunit of the slx1-slx4 structure-specific endonuclease that resolves DNA secondary structures generated during DNA repair and recombination. Has endonuclease activity towards branched DNA substrates, introducing single-strand cuts in duplex DNA close to junctions with ss-DNA. The chain is Structure-specific endonuclease subunit slx1 (slx1a) from Xenopus laevis (African clawed frog).